The primary structure comprises 410 residues: LL-diaminopimelate aminotransferase (410 aa).

Tyr15 and Gly42 together coordinate substrate. Residues Tyr72, 108-109, Tyr132, Asn187, Tyr218, and 246-248 contribute to the pyridoxal 5'-phosphate site; these read SK and SFS. Lys109, Tyr132, and Asn187 together coordinate substrate. The residue at position 249 (Lys249) is an N6-(pyridoxal phosphate)lysine. Pyridoxal 5'-phosphate is bound by residues Arg257 and Asn292. Substrate contacts are provided by Asn292 and Arg388.

Belongs to the class-I pyridoxal-phosphate-dependent aminotransferase family. LL-diaminopimelate aminotransferase subfamily. As to quaternary structure, homodimer. It depends on pyridoxal 5'-phosphate as a cofactor.

It carries out the reaction (2S,6S)-2,6-diaminopimelate + 2-oxoglutarate = (S)-2,3,4,5-tetrahydrodipicolinate + L-glutamate + H2O + H(+). It functions in the pathway amino-acid biosynthesis; L-lysine biosynthesis via DAP pathway; LL-2,6-diaminopimelate from (S)-tetrahydrodipicolinate (aminotransferase route): step 1/1. Its function is as follows. Involved in the synthesis of meso-diaminopimelate (m-DAP or DL-DAP), required for both lysine and peptidoglycan biosynthesis. Catalyzes the direct conversion of tetrahydrodipicolinate to LL-diaminopimelate. This is LL-diaminopimelate aminotransferase from Geobacter sulfurreducens (strain ATCC 51573 / DSM 12127 / PCA).